Consider the following 1337-residue polypeptide: MPTSGAPSNLDRANAQLSNTSSTESSSSNNSSTASGSRHVKIESNRVSLPPLKIQKGSFPAIRQPTESSTHFQSSHSVSNAHNQSPLNQSQSSANPVTFEIADEPSPSFNHSFFEKDNARDIPQQPSHSQNPSSSSSSSSSQSSQHSTHLQFQIPSNEKKSLDDPSPRRKPSFFSKSNLKRKYRYLKNPDAWNLPPSLQFIPKNLNRKGLKPVIRAAINSWIAFLLVLARHTNRVLGMSSFFVVITSILVPAMEPIAPMLWKTLFQFLLLFSAYAWTVLAAKLATVARGSPSREASLAQAVSEGFVCPDPSQGFNYCIREAVFQGYFVRPLPSIIWALFEFSAVALFIRLKMKYPPLNFPCVFSIICTAVSANMGPMYPYFYPRIGLFFIVPNCVQTGITIGCTLFILPETCNHAYNTMLCKLTEDTSSFLKRQTEMLSHSPASSHWASFSSLENEIANLKNLLSKMKSTELFLDMEFSYGRLKGEDLVSIQRIFKKTILRLSAFSYFQRLIDHNMQIYDDETIQKAGEATVSSWLNTPALSAASARTSSGRNSSESDRVSYFGLAPVNATTQDSERNGEEIRRLASKQLNVPVNNNFRTVGYASPSNASTASFNDIVQRGRSHVRTGSNNSEAPLAAKTSTTKRNGDLLEPQSPSLRSHKSRLHLPSSLGKFYKKRKKSYKPVGVLEAQQYLALESRLPFNKPQFLDSLLSILKNSSGDLFDQAIYSLDALNAWLVELNHDRIKKIFSKRDQKAAGRDRLKLIKLHYDHLSQALHEYEREKCFDVRKPYESLFQNQDVQQFYMHSLRSLFVVYYYESHLMQAVRGILQILETVIDLEERRPIRRLWWPLRSIRRSLLSQLTGHQGDYDENIHNDVDKDMNQSSTQPRDPDADHPSSLYHICGYRLTKFFKSIFRPMNVFVLKVGTLAVICTIPAFCRSSAGWYYRNRGLWAVILAIMSLQRFTADTVYGYLMRIFGTFFGAILGMVIWYTGSGHGLGNAYGLAAVWGAAIPFIQFIRVHFVILTPMPAVIFCVTAALTVTYSWKSNHEPGVVTLGIGWDVAYRRFLTVAAGITVAFIFSFLPQPRTAKYAVRKNIGNTLIDIGSIHCEISNFARRPVHNHIDPDIQSKVLNLSNTIQSLIGRLNMVNFEPSFKGRWPMEKYQLLCKTQLELVDLLNSLMTTITTLEDRWLFALLYRVGWLDHKFVADQLAVLYMSSNALQTGNPLPQVVPSPLVDRFFTTSGDVFLPPGLNDAPVPIPKAMEYELLNNMQYLNFAVGCTIAYAVVNHIDRIMFITKSLCGEIFEIDKWPFHFDDEYLYTCHPTNSPDQRKSPHDLV.

Disordered regions lie at residues 1–94 (MPTS…QSSA) and 119–174 (ARDI…PSFF). 2 stretches are compositionally biased toward low complexity: residues 18-37 (SNTSSTESSSSNNSSTASGS) and 68-79 (SSTHFQSSHSVS). Over residues 80-94 (NAHNQSPLNQSQSSA) the composition is skewed to polar residues. The segment covering 123 to 147 (PQQPSHSQNPSSSSSSSSSQSSQHS) has biased composition (low complexity). The span at 157–167 (NEKKSLDDPSP) shows a compositional bias: basic and acidic residues. Helical transmembrane passes span 209–229 (GLKPVIRAAINSWIAFLLVLA), 241–261 (FFVVITSILVPAMEPIAPMLW), 267–287 (FLLLFSAYAWTVLAAKLATVA), 328–348 (VRPLPSIIWALFEFSAVALFI), 361–381 (CVFSIICTAVSANMGPMYPYF), and 387–407 (LFFIVPNCVQTGITIGCTLFI). Disordered regions lie at residues 623 to 662 (SHVRTGSNNSEAPLAAKTSTTKRNGDLLEPQSPSLRSHKS) and 868 to 894 (YDENIHNDVDKDMNQSSTQPRDPDADH). Positions 626 to 644 (RTGSNNSEAPLAAKTSTTK) are enriched in polar residues. Residues 868 to 880 (YDENIHNDVDKDM) show a composition bias toward basic and acidic residues. 6 helical membrane passes run 917-937 (MNVFVLKVGTLAVICTIPAFC), 975-995 (IFGTFFGAILGMVIWYTGSGH), 997-1017 (LGNAYGLAAVWGAAIPFIQFI), 1021-1041 (FVILTPMPAVIFCVTAALTVT), 1066-1086 (FLTVAAGITVAFIFSFLPQPR), and 1275-1295 (FAVGCTIAYAVVNHIDRIMFI).

Its subcellular location is the membrane. This is an uncharacterized protein from Schizosaccharomyces pombe (strain 972 / ATCC 24843) (Fission yeast).